The primary structure comprises 145 residues: Deoxyuridine 5'-triphosphate nucleotidohydrolase (145 aa).

Residues 62–64, Asn-75, 79–81, and Lys-89 each bind substrate; these read RSG and TVD.

This sequence belongs to the dUTPase family. Mg(2+) is required as a cofactor.

It carries out the reaction dUTP + H2O = dUMP + diphosphate + H(+). The protein operates within pyrimidine metabolism; dUMP biosynthesis; dUMP from dCTP (dUTP route): step 2/2. Functionally, this enzyme is involved in nucleotide metabolism: it produces dUMP, the immediate precursor of thymidine nucleotides and it decreases the intracellular concentration of dUTP so that uracil cannot be incorporated into DNA. This is Deoxyuridine 5'-triphosphate nucleotidohydrolase from Helicobacter pylori (strain Shi470).